The sequence spans 295 residues: Indole-3-glycerol phosphate synthase (295 aa).

This sequence belongs to the TrpC family.

It carries out the reaction 1-(2-carboxyphenylamino)-1-deoxy-D-ribulose 5-phosphate + H(+) = (1S,2R)-1-C-(indol-3-yl)glycerol 3-phosphate + CO2 + H2O. It participates in amino-acid biosynthesis; L-tryptophan biosynthesis; L-tryptophan from chorismate: step 4/5. This Synechococcus sp. (strain ATCC 27144 / PCC 6301 / SAUG 1402/1) (Anacystis nidulans) protein is Indole-3-glycerol phosphate synthase.